The sequence spans 47 residues: Photosystem II reaction center protein K (47 aa).

A propeptide spanning residues M1 to A10 is cleaved from the precursor. A helical membrane pass occupies residues F19 to V39.

This sequence belongs to the PsbK family. In terms of assembly, PSII is composed of 1 copy each of membrane proteins PsbA, PsbB, PsbC, PsbD, PsbE, PsbF, PsbH, PsbI, PsbJ, PsbK, PsbL, PsbM, PsbT, PsbX, PsbY, PsbZ, Psb30/Ycf12, peripheral proteins PsbO, CyanoQ (PsbQ), PsbU, PsbV and a large number of cofactors. It forms dimeric complexes.

The protein resides in the cellular thylakoid membrane. Its function is as follows. One of the components of the core complex of photosystem II (PSII). PSII is a light-driven water:plastoquinone oxidoreductase that uses light energy to abstract electrons from H(2)O, generating O(2) and a proton gradient subsequently used for ATP formation. It consists of a core antenna complex that captures photons, and an electron transfer chain that converts photonic excitation into a charge separation. The sequence is that of Photosystem II reaction center protein K from Parasynechococcus marenigrum (strain WH8102).